Consider the following 226-residue polypeptide: MTTPLTWHDVIGAEKEKPYFQQILSQVAQQRQAGKIIYPPQEDVFNAFRFTPFENVNVVILGQDPYHGPNQAHGLSFSVRPGVPAPPSLVNMYKELEQEYPDFKRPNHGYLESWAQQGVLLLNTVLTVEKGQAHSHANYGWEVFTDAVIEQINQRREGVIFLLWGAHAQKKGRFIDTNKHFILKAPHPSPLSAHRGFLGCGHFKQTNNLLAQQGRTPINWQLDPIE.

The active-site Proton acceptor is aspartate 64.

It belongs to the uracil-DNA glycosylase (UDG) superfamily. UNG family.

The protein localises to the cytoplasm. It carries out the reaction Hydrolyzes single-stranded DNA or mismatched double-stranded DNA and polynucleotides, releasing free uracil.. Its function is as follows. Excises uracil residues from the DNA which can arise as a result of misincorporation of dUMP residues by DNA polymerase or due to deamination of cytosine. The sequence is that of Uracil-DNA glycosylase from Proteus mirabilis (strain HI4320).